Here is a 197-residue protein sequence, read N- to C-terminus: Imidazoleglycerol-phosphate dehydratase (197 aa).

This sequence belongs to the imidazoleglycerol-phosphate dehydratase family.

Its subcellular location is the cytoplasm. It carries out the reaction D-erythro-1-(imidazol-4-yl)glycerol 3-phosphate = 3-(imidazol-4-yl)-2-oxopropyl phosphate + H2O. The protein operates within amino-acid biosynthesis; L-histidine biosynthesis; L-histidine from 5-phospho-alpha-D-ribose 1-diphosphate: step 6/9. This is Imidazoleglycerol-phosphate dehydratase from Marinobacter nauticus (strain ATCC 700491 / DSM 11845 / VT8) (Marinobacter aquaeolei).